A 344-amino-acid polypeptide reads, in one-letter code: Phosphoribosylformylglycinamidine cyclo-ligase (344 aa).

Belongs to the AIR synthase family.

Its subcellular location is the cytoplasm. The enzyme catalyses 2-formamido-N(1)-(5-O-phospho-beta-D-ribosyl)acetamidine + ATP = 5-amino-1-(5-phospho-beta-D-ribosyl)imidazole + ADP + phosphate + H(+). It participates in purine metabolism; IMP biosynthesis via de novo pathway; 5-amino-1-(5-phospho-D-ribosyl)imidazole from N(2)-formyl-N(1)-(5-phospho-D-ribosyl)glycinamide: step 2/2. This chain is Phosphoribosylformylglycinamidine cyclo-ligase, found in Neisseria gonorrhoeae (strain ATCC 700825 / FA 1090).